A 181-amino-acid polypeptide reads, in one-letter code: Large ribosomal subunit protein uL5 (181 aa).

It belongs to the universal ribosomal protein uL5 family. Part of the 50S ribosomal subunit; part of the 5S rRNA/L5/L18/L25 subcomplex. Contacts the 5S rRNA and the P site tRNA. Forms a bridge to the 30S subunit in the 70S ribosome.

Functionally, this is one of the proteins that bind and probably mediate the attachment of the 5S RNA into the large ribosomal subunit, where it forms part of the central protuberance. In the 70S ribosome it contacts protein S13 of the 30S subunit (bridge B1b), connecting the 2 subunits; this bridge is implicated in subunit movement. Contacts the P site tRNA; the 5S rRNA and some of its associated proteins might help stabilize positioning of ribosome-bound tRNAs. The chain is Large ribosomal subunit protein uL5 from Mycoplasmopsis pulmonis (strain UAB CTIP) (Mycoplasma pulmonis).